The sequence spans 1404 residues: DNA-directed RNA polymerase subunit beta' (1404 aa).

Residues Cys72, Cys74, Cys87, and Cys90 each coordinate Zn(2+). Mg(2+) contacts are provided by Asp462, Asp464, and Asp466. 4 residues coordinate Zn(2+): Cys816, Cys890, Cys897, and Cys900.

Belongs to the RNA polymerase beta' chain family. The RNAP catalytic core consists of 2 alpha, 1 beta, 1 beta' and 1 omega subunit. When a sigma factor is associated with the core the holoenzyme is formed, which can initiate transcription. The cofactor is Mg(2+). It depends on Zn(2+) as a cofactor.

The catalysed reaction is RNA(n) + a ribonucleoside 5'-triphosphate = RNA(n+1) + diphosphate. DNA-dependent RNA polymerase catalyzes the transcription of DNA into RNA using the four ribonucleoside triphosphates as substrates. The sequence is that of DNA-directed RNA polymerase subunit beta' from Azoarcus sp. (strain BH72).